A 589-amino-acid chain; its full sequence is MSSDANLNVLWARALLEELVRGGVRHAVVCPGSRSSPLALACAGTEGLRTWSVIDERSAGFFALGLAKQSRAPAVVVATSGTAGAHFYPAVIEAALSHVPLVVLTADRPLELQGWGAPQTVPQARFFGEHARFYADLGQPEAHDAALIHMRATVARAVVSAWRAPRGAVQLNVPFREPLAPIAEPFPEASLSALAKSGRAGAPLTRIVPPEPVPDASTLDEVRRRIAATTRGVIVCGPRDEMDGFAAAISALSQATGYPVLAESTSQARYGGGPLTLSYYDAMLRHAPFAKAHRPELVLRFGGGLTPKVPQQWLDGSGADTVLFSDGGGLFDPAHRASTVVEGSAVAACEALTRGLARGVGAWARGFLAAEQRVRTALEAAFAEQPDVLSEPRIAREVVAALPAGAPLFVSSSMPIRDLDAFAPAGTVPLRVLANRGANGIDGIVSSALGMAAAAGRSAVLLTGDLALLHDVGAFVTASRTRVPLTVVAVNNDGGGIFSFLPIAQVAPRDTFETLFGTPHGVDLSHAAALGGARLHRPETPVALRSAVREGLEGGLHLVEVRVDRNANVDEHRRLFARMAASLGEGPWA.

This sequence belongs to the TPP enzyme family. MenD subfamily. As to quaternary structure, homodimer. Mg(2+) serves as cofactor. It depends on Mn(2+) as a cofactor. Thiamine diphosphate is required as a cofactor.

The catalysed reaction is isochorismate + 2-oxoglutarate + H(+) = 5-enolpyruvoyl-6-hydroxy-2-succinyl-cyclohex-3-ene-1-carboxylate + CO2. It functions in the pathway quinol/quinone metabolism; 1,4-dihydroxy-2-naphthoate biosynthesis; 1,4-dihydroxy-2-naphthoate from chorismate: step 2/7. It participates in quinol/quinone metabolism; menaquinone biosynthesis. In terms of biological role, catalyzes the thiamine diphosphate-dependent decarboxylation of 2-oxoglutarate and the subsequent addition of the resulting succinic semialdehyde-thiamine pyrophosphate anion to isochorismate to yield 2-succinyl-5-enolpyruvyl-6-hydroxy-3-cyclohexene-1-carboxylate (SEPHCHC). This Myxococcus xanthus (strain DK1622) protein is 2-succinyl-5-enolpyruvyl-6-hydroxy-3-cyclohexene-1-carboxylate synthase.